Here is a 295-residue protein sequence, read N- to C-terminus: Polyadenylate-binding protein 2-B (295 aa).

Residues methionine 1–glutamine 102 are disordered. 2 stretches are compositionally biased toward gly residues: residues leucine 19–aspartate 31 and glycine 71–glycine 81. Residues glutamate 83–glycine 96 show a composition bias toward acidic residues. A coiled-coil region spans residues aspartate 106 to serine 140. A necessary for homooligomerization region spans residues asparagine 145–tyrosine 295. The 78-residue stretch at arginine 162–threonine 239 folds into the RRM domain.

As to quaternary structure, monomer and homooligomer. Binds RNA as a monomer and oligomerizes when bound to poly(A).

It is found in the nucleus. The protein localises to the cytoplasm. Functionally, involved in the 3'-end formation of mRNA precursors (pre-mRNA) by the addition of a poly(A) tail of 200-250 nt to the upstream cleavage product. Stimulates poly(A) polymerase (PAPOLA) conferring processivity on the poly(A) tail elongation reaction and also controls the poly(A) tail length. Increases the affinity of poly(A) polymerase for RNA. Binds to poly(A) and to poly(G) with high affinity. May protect the poly(A) tail from degradation. This is Polyadenylate-binding protein 2-B (pabpn1-b) from Xenopus laevis (African clawed frog).